Consider the following 126-residue polypeptide: Aspartate 1-decarboxylase (126 aa).

The Schiff-base intermediate with substrate; via pyruvic acid role is filled by Ser-25. Pyruvic acid (Ser) is present on Ser-25. Residue Thr-57 coordinates substrate. The active-site Proton donor is Tyr-58. Gly-73 to Ala-75 lines the substrate pocket.

The protein belongs to the PanD family. Heterooctamer of four alpha and four beta subunits. Pyruvate is required as a cofactor. In terms of processing, is synthesized initially as an inactive proenzyme, which is activated by self-cleavage at a specific serine bond to produce a beta-subunit with a hydroxyl group at its C-terminus and an alpha-subunit with a pyruvoyl group at its N-terminus.

The protein localises to the cytoplasm. The catalysed reaction is L-aspartate + H(+) = beta-alanine + CO2. It participates in cofactor biosynthesis; (R)-pantothenate biosynthesis; beta-alanine from L-aspartate: step 1/1. Catalyzes the pyruvoyl-dependent decarboxylation of aspartate to produce beta-alanine. The protein is Aspartate 1-decarboxylase of Xanthomonas oryzae pv. oryzae (strain MAFF 311018).